Consider the following 180-residue polypeptide: Large ribosomal subunit protein uL6 (180 aa).

It belongs to the universal ribosomal protein uL6 family. Part of the 50S ribosomal subunit.

This protein binds to the 23S rRNA, and is important in its secondary structure. It is located near the subunit interface in the base of the L7/L12 stalk, and near the tRNA binding site of the peptidyltransferase center. The chain is Large ribosomal subunit protein uL6 from Thermus aquaticus.